Consider the following 132-residue polypeptide: Interleukin-4 (132 aa).

An N-terminal signal peptide occupies residues 1–24 (MGLTSQLIPTLVCLLALTSTFVHG). N-linked (GlcNAc...) asparagine glycans are attached at residues asparagine 28, asparagine 45, asparagine 62, asparagine 83, asparagine 95, and asparagine 101. Disulfide bonds link cysteine 48-cysteine 84 and cysteine 70-cysteine 104.

This sequence belongs to the IL-4/IL-13 family.

Its subcellular location is the secreted. In terms of biological role, participates in at least several B-cell activation processes as well as of other cell types. It is a costimulator of DNA-synthesis. It induces the expression of class II MHC molecules on resting B-cells. It enhances both secretion and cell surface expression of IgE and IgG1. It also regulates the expression of the low affinity Fc receptor for IgE (CD23) on both lymphocytes and monocytes. Positively regulates IL31RA expression in macrophages. Stimulates autophagy in dendritic cells by interfering with mTORC1 signaling and through the induction of RUFY4. This is Interleukin-4 (IL4) from Canis lupus familiaris (Dog).